A 268-amino-acid chain; its full sequence is Tryptophan synthase alpha chain (268 aa).

Active-site proton acceptor residues include Glu49 and Asp60.

It belongs to the TrpA family. Tetramer of two alpha and two beta chains.

It carries out the reaction (1S,2R)-1-C-(indol-3-yl)glycerol 3-phosphate + L-serine = D-glyceraldehyde 3-phosphate + L-tryptophan + H2O. The protein operates within amino-acid biosynthesis; L-tryptophan biosynthesis; L-tryptophan from chorismate: step 5/5. The alpha subunit is responsible for the aldol cleavage of indoleglycerol phosphate to indole and glyceraldehyde 3-phosphate. The polypeptide is Tryptophan synthase alpha chain (Xanthomonas oryzae pv. oryzae (strain MAFF 311018)).